The following is a 335-amino-acid chain: Ornithine carbamoyltransferase, catabolic (335 aa).

Carbamoyl phosphate contacts are provided by residues Ser-59 to Thr-62, Gln-86, Arg-110, and His-137 to Gln-140. Residues Asn-169, Asp-233, and Ser-237 to Met-238 each bind L-ornithine. Residues Cys-274–Leu-275 and Arg-319 each bind carbamoyl phosphate.

Belongs to the aspartate/ornithine carbamoyltransferase superfamily. OTCase family.

The protein resides in the cytoplasm. The catalysed reaction is carbamoyl phosphate + L-ornithine = L-citrulline + phosphate + H(+). It participates in amino-acid degradation; L-arginine degradation via ADI pathway; carbamoyl phosphate from L-arginine: step 2/2. Its function is as follows. Reversibly catalyzes the transfer of the carbamoyl group from carbamoyl phosphate (CP) to the N(epsilon) atom of ornithine (ORN) to produce L-citrulline. The polypeptide is Ornithine carbamoyltransferase, catabolic (arcB) (Bacillus licheniformis (strain ATCC 14580 / DSM 13 / JCM 2505 / CCUG 7422 / NBRC 12200 / NCIMB 9375 / NCTC 10341 / NRRL NRS-1264 / Gibson 46)).